The sequence spans 304 residues: MPELALLEEVVEKVRPLLGQGKVANYIPALASVDAGKLGIAVTTVDGETLGAGDYLEPFSIQSISKVFSLTLALTLYEEAEIWSRVGKEPSGHSFNSLVQVELERGKPRNPFINAGALVIADLLQSRLGAPKHRMLELVRQLSQNDKVCFDKQVADSEYQHSARNAAIAYLMKSFGNFQGDVDTVLRTYFHYCALKMNCADLSRAMLYLANRGKTVDGTELISQVQTRQLNALLATSGLYDGAGEFAYRVGMPGKSGVGGGIIAVIPGELSICVWSPELDENGNSLAGTAMLEHLSQRLGRSIF.

7 residues coordinate substrate: serine 63, asparagine 114, glutamate 158, asparagine 165, tyrosine 189, tyrosine 240, and valine 258.

The protein belongs to the glutaminase family. Homotetramer.

The catalysed reaction is L-glutamine + H2O = L-glutamate + NH4(+). The polypeptide is Glutaminase (Shewanella putrefaciens (strain CN-32 / ATCC BAA-453)).